The chain runs to 241 residues: Xyloglucan-specific endo-beta-1,4-glucanase 1 (241 aa).

Positions 1–19 (MKGLLAGTIAAATFAVASA) are cleaved as a signal peptide. E136 is a catalytic residue. 2 N-linked (GlcNAc...) asparagine glycosylation sites follow: N174 and N190. E222 is a catalytic residue.

Belongs to the glycosyl hydrolase 12 (cellulase H) family. As to quaternary structure, interacts with host apoplastic glucanase inhibitor GIP2.

It catalyses the reaction xyloglucan + H2O = xyloglucan oligosaccharides.. With respect to regulation, the xyloglucanase activity is inhibited by the binding of the host apoplastic glucanase inhibitor GIP2. Glycoside hydrolase that exhibits xyloglucanase activity. Acts as an important virulence factor during P.parasitica infection of its host Nicotiana benthamiana. Also acts as a pathogen-associated molecular pattern (PAMP) in host species, where it can trigger defense responses including cell death. The PAMP activity is independent of its xyloglucanase activity. With paralog XLP1, is required to elevate apoplastic sugar during P.parasitica infection. In Phytophthora nicotianae (strain INRA-310) (Phytophthora parasitica), this protein is Xyloglucan-specific endo-beta-1,4-glucanase 1.